A 279-amino-acid polypeptide reads, in one-letter code: 3-methyl-2-oxobutanoate hydroxymethyltransferase 2 (279 aa).

Mg(2+) contacts are provided by Asp58 and Asp97. Residues 58–59, Asp97, and Lys126 each bind 3-methyl-2-oxobutanoate; that span reads DS. Glu128 contacts Mg(2+). Catalysis depends on Glu195, which acts as the Proton acceptor.

This sequence belongs to the PanB family. As to quaternary structure, homodecamer; pentamer of dimers. It depends on Mg(2+) as a cofactor.

The protein localises to the cytoplasm. It catalyses the reaction 3-methyl-2-oxobutanoate + (6R)-5,10-methylene-5,6,7,8-tetrahydrofolate + H2O = 2-dehydropantoate + (6S)-5,6,7,8-tetrahydrofolate. It functions in the pathway cofactor biosynthesis; (R)-pantothenate biosynthesis; (R)-pantoate from 3-methyl-2-oxobutanoate: step 1/2. In terms of biological role, catalyzes the reversible reaction in which hydroxymethyl group from 5,10-methylenetetrahydrofolate is transferred onto alpha-ketoisovalerate to form ketopantoate. The chain is 3-methyl-2-oxobutanoate hydroxymethyltransferase 2 from Methylibium petroleiphilum (strain ATCC BAA-1232 / LMG 22953 / PM1).